The following is a 338-amino-acid chain: Fructose-1,6-bisphosphatase class 1 1 (338 aa).

4 residues coordinate Mg(2+): Glu88, Asp107, Leu109, and Asp110. Substrate-binding positions include 110–113 (DGSS) and Asn196. A Mg(2+)-binding site is contributed by Glu268.

Belongs to the FBPase class 1 family. In terms of assembly, homotetramer. It depends on Mg(2+) as a cofactor.

The protein resides in the cytoplasm. The catalysed reaction is beta-D-fructose 1,6-bisphosphate + H2O = beta-D-fructose 6-phosphate + phosphate. Its pathway is carbohydrate biosynthesis; Calvin cycle. The protein is Fructose-1,6-bisphosphatase class 1 1 of Bradyrhizobium sp. (strain BTAi1 / ATCC BAA-1182).